A 385-amino-acid polypeptide reads, in one-letter code: S-adenosylmethionine synthase (385 aa).

Position 14 (H14) interacts with ATP. Position 16 (D16) interacts with Mg(2+). A K(+)-binding site is contributed by E42. E55 and Q98 together coordinate L-methionine. The tract at residues 98–108 (QSGDIAQAVDN) is flexible loop. ATP-binding positions include 165–167 (DAK), 232–233 (RF), D241, 247–248 (RK), A264, and K268. D241 contributes to the L-methionine binding site. An L-methionine-binding site is contributed by K272.

This sequence belongs to the AdoMet synthase family. Homotetramer; dimer of dimers. The cofactor is Mg(2+). Requires K(+) as cofactor.

It localises to the cytoplasm. The catalysed reaction is L-methionine + ATP + H2O = S-adenosyl-L-methionine + phosphate + diphosphate. It functions in the pathway amino-acid biosynthesis; S-adenosyl-L-methionine biosynthesis; S-adenosyl-L-methionine from L-methionine: step 1/1. Its function is as follows. Catalyzes the formation of S-adenosylmethionine (AdoMet) from methionine and ATP. The overall synthetic reaction is composed of two sequential steps, AdoMet formation and the subsequent tripolyphosphate hydrolysis which occurs prior to release of AdoMet from the enzyme. The protein is S-adenosylmethionine synthase of Leuconostoc mesenteroides subsp. mesenteroides (strain ATCC 8293 / DSM 20343 / BCRC 11652 / CCM 1803 / JCM 6124 / NCDO 523 / NBRC 100496 / NCIMB 8023 / NCTC 12954 / NRRL B-1118 / 37Y).